The primary structure comprises 503 residues: Sodium/hydrogen exchanger 3 (503 aa).

Topologically, residues 1-22 (MVIGLSTMLEKTEALFASDHAS) are cytoplasmic. A helical membrane pass occupies residues 23-43 (VVSMNLFVALLCACIVLGHLL). Over 44-51 (EETRWMNE) the chain is Vacuolar. The N-linked (GlcNAc...) asparagine glycan is linked to Asn-50. A helical membrane pass occupies residues 52 to 72 (SITALIIGSCTGIVILLISGG). Topologically, residues 73–76 (KSSR) are cytoplasmic. Residues 77–97 (ILVFSEDLFFIYLLPPIIFNA) constitute an intramembrane region (helical). Residues 98-109 (GFQVKKKQFFRN) are Cytoplasmic-facing. Residues 110–130 (FMTIMLFGAIGTLISFVIISF) traverse the membrane as a helical segment. Residues 131–138 (GAKHLFEK) are Vacuolar-facing. A helical transmembrane segment spans residues 139-159 (MNIGDLTIADYLAIGAIFSAT). The Cytoplasmic segment spans residues 160-174 (DSVCTLQVLNQDETP). Residues 175-195 (LLYSLVFGEGVVNDATSVVLF) form a helical membrane-spanning segment. Residues 196–219 (NAIQRFDLTNINSAIALEFAGNFF) lie on the Vacuolar side of the membrane. Residues 220–240 (YLFILSTALGVAAGLLSAFVI) form a helical membrane-spanning segment. The Cytoplasmic segment spans residues 241 to 265 (KKLYIGRHSTDREVALMMLLAYLSY). The chain crosses the membrane as a helical span at residues 266 to 286 (MLAELFHLSSILTVFFCGIVM). Residues 287–305 (SHYTWHNVTDKSKVTTKHT) lie on the Vacuolar side of the membrane. An N-linked (GlcNAc...) asparagine glycan is attached at Asn-293. A helical transmembrane segment spans residues 306–326 (FAAMSFLAEIFIFLYVGMDAL). At 327–345 (DIEKWDVVRNSPGQSIGVS) the chain is on the cytoplasmic side. Residues 346–366 (SILLGLILLGRAAFVFPLSFL) traverse the membrane as a helical segment. Over 367–383 (SNLTKSSPDEKIDLKKQ) the chain is Vacuolar. N-linked (GlcNAc...) asparagine glycosylation occurs at Asn-368. The helical transmembrane segment at 384–406 (VTIWWAGLMRGAVSMALAYNQFT) threads the bilayer. Residues 407 to 416 (TSGHTKVLGN) are Cytoplasmic-facing. Residues 417–437 (AIMITSTITVVLFSTVVFGLL) form a helical membrane-spanning segment. Residues 438–503 (TKPLVKHLQP…FWKSPSRFTH (66 aa)) lie on the Vacuolar side of the membrane.

Belongs to the monovalent cation:proton antiporter 1 (CPA1) transporter (TC 2.A.36) family. In terms of tissue distribution, expressed in roots.

The protein localises to the vacuole membrane. It catalyses the reaction Na(+)(in) + H(+)(out) = Na(+)(out) + H(+)(in). The catalysed reaction is K(+)(in) + H(+)(out) = K(+)(out) + H(+)(in). Its function is as follows. May act in low affinity electroneutral exchange of protons for cations such as Na(+) or K(+) across membranes. May also exchange Li(+) and Cs(+) with a lower affinity. The protein is Sodium/hydrogen exchanger 3 (NHX3) of Arabidopsis thaliana (Mouse-ear cress).